A 769-amino-acid polypeptide reads, in one-letter code: DNA mismatch repair protein MLH1 (769 aa).

The tract at residues 1 to 335 (MSLRIKALDA…IANQLHAELS (335 aa)) is DNA- and ATP-binding. A compositionally biased stretch (polar residues) spans 422-441 (EGSSTKRQLSEPKVTNVSHS). A disordered region spans residues 422–480 (EGSSTKRQLSEPKVTNVSHSQEAEKLTLNESEQPRDANTINDNDLKDQPKKKQKLGDYK). S441 is modified (phosphoserine; by ATM or ATR). 2 stretches are compositionally biased toward basic and acidic residues: residues 442–456 (QEAEKLTLNESEQPR) and 464–478 (NDLKDQPKKKQKLGD). The segment at 501–756 (RVPKERVNVN…RHILKDVVEI (256 aa)) is interaction with PMS1.

The protein belongs to the DNA mismatch repair MutL/HexB family. As to quaternary structure, heterodimer of MLH1 and PMS1, called MutLalpha, which is the major MMR MutL activity correcting base-base mismatches as well as IDLs. The heterodimer binds double strand DNA independently of a mismatch with positive cooperativity and has more than one DNA binding site. Forms a ternary complex with either the MSH2-MSH6 (MutSalpha) or the MSH2-MSH3 heterodimer (MutSbeta), which recognize and bind to mismatch DNA. Ternary complex formation is promoted by ATP binding. Heterodimer of MLH1 and MLH3, called MutLbeta, which is involved in correction of a specific subset of IDLs when associated with MutSbeta. Heterodimer of MLH1 and MLH2.

The protein localises to the nucleus. Functionally, required for DNA mismatch repair (MMR), correcting base-base mismatches and insertion-deletion loops (IDLs) resulting from DNA replication, DNA damage or from recombination events between non-identical sequences during meiosis. Component of different MutL heterodimers that form a ternary complex with the MutS heterodimers, which initially recognize the DNA mismatches. This complex is thought to be responsible for directing the downstream MMR events, including strand discrimination, excision, and resynthesis. Plays a major role in maintaining the genetic stability of simple sequence repeats, the repair of heteroduplex sites present in meiotic recombination intermediates, and the promotion of meiotic crossing-over. The polypeptide is DNA mismatch repair protein MLH1 (MLH1) (Saccharomyces cerevisiae (strain ATCC 204508 / S288c) (Baker's yeast)).